A 209-amino-acid chain; its full sequence is MKGILGKKVGMTQIFTDKGVVIPVTAVEAGPMVVTQIKTVDKDGYNAIQIGFEDAKEKALNKPKKGHLAAANVLKKHLKEFRVDSVEGYTVGQEIKADVFEAGAKIDVTGISKGKGFQGPIKRHGQSRGPETHGSRYHRRPGSMGACSYPGRVFKNKKLAGHMGSVKVTVQNLEVVKVDADKNLILVKGAIPGAKGSVVTIKEAIKVSK.

The interval 117 to 142 is disordered; the sequence is FQGPIKRHGQSRGPETHGSRYHRRPG.

Belongs to the universal ribosomal protein uL3 family. As to quaternary structure, part of the 50S ribosomal subunit. Forms a cluster with proteins L14 and L19.

Its function is as follows. One of the primary rRNA binding proteins, it binds directly near the 3'-end of the 23S rRNA, where it nucleates assembly of the 50S subunit. In Clostridioides difficile (strain 630) (Peptoclostridium difficile), this protein is Large ribosomal subunit protein uL3.